A 617-amino-acid polypeptide reads, in one-letter code: Erythritol-mannosyl-transferase 1 (617 aa).

2 disordered regions span residues 365 to 396 (RNPG…IDSR) and 567 to 617 (RQRK…VTNP). Positions 371-381 (GFTSPLNSPTA) are enriched in polar residues. Residues 386–396 (KWDEKRPIDSR) show a composition bias toward basic and acidic residues. A compositionally biased stretch (polar residues) spans 578–603 (TAKTSLSVDTTEVATPTFTDTETSLS).

This sequence belongs to the UDP-glycosyltransferase family.

Its pathway is secondary metabolite biosynthesis. Functionally, glycosyltransferase; part of the gene cluster that mediates the biosynthesis of mannosylerythritol lipids (MELs), surface-active substances that enhance the availability of water-insoluble substrates. Depending on the number of acetyl groups, mannosylerythritol lipids can be differentiated into MEL A (fully acetylated), MEL B and MEL C (monoacetylated at R-6 and R-4, respectively), and the fully deacetylated MEL D. The first step in the pathway is the generation of mannosylerythritol by the glycosyltransferase EMT1 which catalyzes the transfer of GDP-mannose to the C-4 atom of meso-erythritol. This reaction has to be stereospecific, since only mannosyl-D-erythritol is generated. The produced disaccharide is subsequently acylated with fatty acids of various lengths by the acyltransferases MAC1 and MAC2 at positions C-2 and C-3, repectively. The existence of MEL derivatives which carry an acetyl group at C-2 implies that at least MAC1 also accepts acetyl-CoA as a donor. The final step of MEL biosynthesis is the acetylation of the fully acylated mannosylerythritol lipids catalyzed by the acetyl-CoA-dependent acetyltransferase MAT1. MAT1 displays a relaxed regioselectivity and is able to transfer acetylgroups to both positions C-4 and C-6 of the mannosyl moiety. This Pseudozyma antarctica (strain T-34) (Yeast) protein is Erythritol-mannosyl-transferase 1.